The chain runs to 219 residues: Flagellin A (219 aa).

Residues 1–12 (MKVKEFMNNKKG) constitute a propeptide that is removed on maturation. N-linked (GlcNAc...) asparagine glycosylation is found at asparagine 38 and asparagine 175.

This sequence belongs to the archaeal flagellin family. Post-translationally, N-linked glycans consist of the 779 Da trisaccharide beta-ManNAc(Thr)-(1-4)-beta-GlcNAc3NAcA-(1-3)-beta-GlcNAc.

The protein resides in the archaeal flagellum. In terms of biological role, flagellin is the subunit protein which polymerizes to form the filaments of archaeal flagella. The polypeptide is Flagellin A (flaA) (Methanococcus voltae).